We begin with the raw amino-acid sequence, 283 residues long: Small ribosomal subunit protein uS3 (283 aa).

One can recognise a KH type-2 domain in the interval 39–107 (VRAYLKTKLK…PVHVNIEEIR (69 aa)). The tract at residues 219–283 (ASDDDKKRRG…AAVSAEKAGE (65 aa)) is disordered. Residues 221–236 (DDDKKRRGPRRDDGKP) are compositionally biased toward basic and acidic residues. Residues 237-260 (SGRPRAPRPEGQPGAAAPGSAPAA) show a composition bias toward low complexity.

It belongs to the universal ribosomal protein uS3 family. Part of the 30S ribosomal subunit. Forms a tight complex with proteins S10 and S14.

In terms of biological role, binds the lower part of the 30S subunit head. Binds mRNA in the 70S ribosome, positioning it for translation. The sequence is that of Small ribosomal subunit protein uS3 from Janthinobacterium sp. (strain Marseille) (Minibacterium massiliensis).